The primary structure comprises 216 residues: MGAARLLPNLTLCLQLLILCCQTQGENHPSPNFNQYVRDQGAMTDQLSRRQIREYQLYSRTSGKHVQVTGRRISATAEDGNKFAKLIVETDTFGSRVRIKGAESEKYICMNKRGKLIGKPSGKSKDCVFTEIVLENNYTAFQNARHEGWFMAFTRQGRPRQASRSRQNQREAHFIKRLYQGQLPFPNHAEKQKQFEFVGSAPTRRTKRTRRPQPLT.

The signal sequence occupies residues 1–22 (MGAARLLPNLTLCLQLLILCCQ). N-linked (GlcNAc...) asparagine glycosylation is present at Asn137. Residues 190 to 216 (EKQKQFEFVGSAPTRRTKRTRRPQPLT) form a disordered region. Residues 204 to 216 (RRTKRTRRPQPLT) show a composition bias toward basic residues.

The protein belongs to the heparin-binding growth factors family. As to quaternary structure, interacts with FGFR3 and FGFR4. As to expression, preferentially expressed in the embryonic brain.

The protein resides in the secreted. Plays an important role in the regulation of embryonic development and as signaling molecule in the induction and patterning of the embryonic brain. Required for normal brain development. The sequence is that of Fibroblast growth factor 17 (FGF17) from Homo sapiens (Human).